Here is a 572-residue protein sequence, read N- to C-terminus: Proline--tRNA ligase (572 aa).

Belongs to the class-II aminoacyl-tRNA synthetase family. ProS type 1 subfamily. In terms of assembly, homodimer.

It localises to the cytoplasm. The catalysed reaction is tRNA(Pro) + L-proline + ATP = L-prolyl-tRNA(Pro) + AMP + diphosphate. Its function is as follows. Catalyzes the attachment of proline to tRNA(Pro) in a two-step reaction: proline is first activated by ATP to form Pro-AMP and then transferred to the acceptor end of tRNA(Pro). As ProRS can inadvertently accommodate and process non-cognate amino acids such as alanine and cysteine, to avoid such errors it has two additional distinct editing activities against alanine. One activity is designated as 'pretransfer' editing and involves the tRNA(Pro)-independent hydrolysis of activated Ala-AMP. The other activity is designated 'posttransfer' editing and involves deacylation of mischarged Ala-tRNA(Pro). The misacylated Cys-tRNA(Pro) is not edited by ProRS. The protein is Proline--tRNA ligase of Psychrobacter arcticus (strain DSM 17307 / VKM B-2377 / 273-4).